Here is a 104-residue protein sequence, read N- to C-terminus: ATP-dependent Clp protease adapter protein ClpS (104 aa).

The protein belongs to the ClpS family. In terms of assembly, binds to the N-terminal domain of the chaperone ClpA.

Involved in the modulation of the specificity of the ClpAP-mediated ATP-dependent protein degradation. The chain is ATP-dependent Clp protease adapter protein ClpS from Hydrogenovibrio crunogenus (strain DSM 25203 / XCL-2) (Thiomicrospira crunogena).